A 142-amino-acid polypeptide reads, in one-letter code: Transcription antitermination protein NusB (142 aa).

The protein belongs to the NusB family.

Its function is as follows. Involved in transcription antitermination. Required for transcription of ribosomal RNA (rRNA) genes. Binds specifically to the boxA antiterminator sequence of the ribosomal RNA (rrn) operons. The polypeptide is Transcription antitermination protein NusB (Levilactobacillus brevis (strain ATCC 367 / BCRC 12310 / CIP 105137 / JCM 1170 / LMG 11437 / NCIMB 947 / NCTC 947) (Lactobacillus brevis)).